The sequence spans 224 residues: Large ribosomal subunit protein uL1c (224 aa).

This sequence belongs to the universal ribosomal protein uL1 family. As to quaternary structure, part of the 50S ribosomal subunit.

The protein localises to the plastid. It localises to the chloroplast. Its function is as follows. Binds directly to 23S rRNA. Might be involved in E site tRNA release (Potential). The sequence is that of Large ribosomal subunit protein uL1c (rpl1) from Cyanidioschyzon merolae (strain NIES-3377 / 10D) (Unicellular red alga).